We begin with the raw amino-acid sequence, 221 residues long: Mitochondrial cardiolipin hydrolase (221 aa).

At methionine 1–serine 4 the chain is on the mitochondrial intermembrane side. Residues methionine 1–arginine 38 form a required for mitochondrial localization region. The chain crosses the membrane as a helical span at residues serine 5–methionine 27. Topologically, residues arginine 28–histidine 221 are cytoplasmic. A C3H1-type; atypical zinc finger spans residues proline 44–serine 75. The PLD phosphodiesterase domain maps to aspartate 148–alanine 175. Catalysis depends on residues histidine 153, lysine 155, and aspartate 160.

Belongs to the phospholipase D family. MitoPLD/Zucchini subfamily. Homodimer. Interacts with MOV10L1. Interacts with MIGA1 and MIGA2; possibly facilitating homodimer formation. Interacts with GK2. In terms of tissue distribution, predominantly expressed in testis (at protein level) and in growing ovary. Also expressed in the brain, eye and urinary bladder (at protein level), but its levels were low or undetectable in other organs.

The protein resides in the mitochondrion outer membrane. The protein localises to the nucleus membrane. It is found in the cell membrane. It localises to the golgi apparatus. It catalyses the reaction a cardiolipin + H2O = a 1,2-diacyl-sn-glycero-3-phospho-(1'-sn-glycerol) + a 1,2-diacyl-sn-glycero-3-phosphate + H(+). With respect to regulation, single stranded DNA (ssDNA) hydrolase activity does not depend upon, but is stimulated by the presence of Ca(2+) and Mn(2+). MIGA1 and MIGA2 increase PLD6 self-association affinity and affects the homodimer conformation facilitating its phospholipase activity over the nuclease activity. MYC induces its expression and stimulates its phospholipase activity. Presents phospholipase and nuclease activities, depending on the different physiological conditions. Interaction with Mitoguardin (MIGA1 or MIGA2) affects the dimer conformation, facilitating the lipase activity over the nuclease activity. Plays a key role in mitochondrial fusion and fission via its phospholipase activity. In its phospholipase role, it uses the mitochondrial lipid cardiolipin as substrate to generate phosphatidate (PA or 1,2-diacyl-sn-glycero-3-phosphate), a second messenger signaling lipid. Production of PA facilitates Mitofusin-mediated fusion, whereas the cleavage of PA by the Lipin family of phosphatases produces diacylgycerol (DAG) which promotes mitochondrial fission. Both Lipin and DAG regulate mitochondrial dynamics and membrane fusion/fission, important processes for adapting mitochondrial metabolism to changes in cell physiology. Mitochondrial fusion enables cells to cope with the increased nucleotide demand during DNA synthesis. Mitochondrial function and dynamics are closely associated with biological processes such as cell growth, proliferation, and differentiation. Mediator of MYC activity, promotes mitochondrial fusion and activates AMPK which in turn inhibits YAP/TAZ, thereby inducing cell growth and proliferation. The endonuclease activity plays a critical role in PIWI-interacting RNA (piRNA) biogenesis during spermatogenesis. Implicated in spermatogenesis and sperm fertility in testicular germ cells, its single strand-specific nuclease activity is critical for the biogenesis/maturation of PIWI-interacting RNA (piRNA). MOV10L1 selectively binds to piRNA precursors and funnels them to the endonuclease that catalyzes the first cleavage step of piRNA processing to generate piRNA intermediate fragments that are subsequently loaded to Piwi proteins. Cleaves either DNA or RNA substrates with similar affinity, producing a 5' phosphate end, in this way it participates in the processing of primary piRNA transcripts. piRNAs provide essential protection against the activity of mobile genetic elements. piRNA-mediated transposon silencing is thus critical for maintaining genome stability, in particular in germline cells when transposons are mobilized as a consequence of wide-spread genomic demethylation. PA may act as signaling molecule in the recognition/transport of the precursor RNAs of primary piRNAs. Interacts with tesmin in testes, suggesting a role in spermatogenesis via association with its interacting partner. This is Mitochondrial cardiolipin hydrolase (Pld6) from Mus musculus (Mouse).